Reading from the N-terminus, the 96-residue chain is Early E1A 11 kDa protein (96 aa).

Disordered regions lie at residues 1–29 and 72–96; these read MNSRMRRWAATSRLLHEDPPATPPSQDQQ and LAQGEEEEEEEDGAEDIEENGEESD. Positions 75-96 are enriched in acidic residues; that stretch reads GEEEEEEEDGAEDIEENGEESD.

The chain is Early E1A 11 kDa protein from Murine adenovirus A serotype 1 (MAdV-1).